A 501-amino-acid polypeptide reads, in one-letter code: G protein-activated inward rectifier potassium channel 1 (501 aa).

A disordered region spans residues 1 to 40 (MSALRRKFGDDYQVVTTSSSGSGLQPQGPGQDPQQQLVPK). The Cytoplasmic segment spans residues 1-80 (MSALRRKFGD…LFTTLVDLKW (80 aa)). Residues 18–38 (SSSGSGLQPQGPGQDPQQQLV) are compositionally biased toward low complexity. A helical membrane pass occupies residues 81–105 (RWNLFIFILTYTVAWLFMASMWWVI). Topologically, residues 106–129 (AYTRGDLNKAHVGNYTPCVANVYN) are extracellular. Residue N119 is glycosylated (N-linked (GlcNAc...) asparagine). The segment at residues 130–141 (FPSAFLFFIETE) is an intramembrane region (helical; Pore-forming). An intramembrane region (pore-forming) is located at residues 142 to 148 (ATIGYGY). The Selectivity filter motif lies at 143–148 (TIGYGY). Over 149–157 (RYITDKCPE) the chain is Extracellular. Residues 158–179 (GIILFLFQSILGSIVDAFLIGC) form a helical membrane-spanning segment. Topologically, residues 180-501 (MFIKMSQPKK…LRKMNSDRFT (322 aa)) are cytoplasmic. The polyphosphoinositide (PIP2)-binding stretch occupies residues 182–209 (IKMSQPKKRAETLMFSEHAVISMRDGKL). 2 positions are modified to phosphoserine: S385 and S424.

The protein belongs to the inward rectifier-type potassium channel (TC 1.A.2.1) family. KCNJ3 subfamily. Associates with KCNJ5/GIRK4 or KCNJ6/GIRK2 to form a G-protein activated heteromultimer pore-forming unit. The resulting inward current is much larger. Associates with KCNJ9/GIRK3 to form a G-protein activated heteromultimer pore-forming unit.

The protein resides in the membrane. It carries out the reaction K(+)(in) = K(+)(out). Heteromultimer composed of KCNJ3/GIRK1 and KCNJ5/GIRK4 is activated by phosphatidylinositol 4,5 biphosphate (PtdIns(4,5)P2). Functionally, inward rectifier potassium channels are characterized by a greater tendency to allow potassium to flow into the cell rather than out of it. Their voltage dependence is regulated by the concentration of extracellular potassium; as external potassium is raised, the voltage range of the channel opening shifts to more positive voltages. The inward rectification is mainly due to the blockage of outward current by internal magnesium. This potassium channel is controlled by G proteins. This receptor plays a crucial role in regulating the heartbeat. The polypeptide is G protein-activated inward rectifier potassium channel 1 (KCNJ3) (Homo sapiens (Human)).